A 637-amino-acid polypeptide reads, in one-letter code: DNA mismatch repair protein MutL (637 aa).

It belongs to the DNA mismatch repair MutL/HexB family.

This protein is involved in the repair of mismatches in DNA. It is required for dam-dependent methyl-directed DNA mismatch repair. May act as a 'molecular matchmaker', a protein that promotes the formation of a stable complex between two or more DNA-binding proteins in an ATP-dependent manner without itself being part of a final effector complex. The protein is DNA mismatch repair protein MutL of Actinobacillus succinogenes (strain ATCC 55618 / DSM 22257 / CCUG 43843 / 130Z).